A 276-amino-acid chain; its full sequence is MSATPDRKGQLGPGDIRARKGGEPVVCLTAYTTPMARLVDAHCDIALVGDSLGMVLHGLPSTIGVSMEMMILHGKAVARGCSRACIVVDMPFGSYEEGPEQAFRNAARLMAETGCQAVKLEGGRHMAETVAFLVARGIPVMGHVGLTPQSVNTLGGYKVQGRGHHEADRIAADAAALADAGAFAVVLEKLPEALGRRITQEIAVPTIGIGAGLDCDGQVLVVDDMLGLFSDFRPKFVKRYAELGQDADAAIAAYAAEVRARRFPGPEHVFGEGKPA.

Mg(2+)-binding residues include Asp50 and Asp89. Residues 50–51 (DS), Asp89, and Lys119 contribute to the 3-methyl-2-oxobutanoate site. Glu121 lines the Mg(2+) pocket. The active-site Proton acceptor is the Glu188.

This sequence belongs to the PanB family. In terms of assembly, homodecamer; pentamer of dimers. Mg(2+) is required as a cofactor.

It localises to the cytoplasm. The enzyme catalyses 3-methyl-2-oxobutanoate + (6R)-5,10-methylene-5,6,7,8-tetrahydrofolate + H2O = 2-dehydropantoate + (6S)-5,6,7,8-tetrahydrofolate. It functions in the pathway cofactor biosynthesis; (R)-pantothenate biosynthesis; (R)-pantoate from 3-methyl-2-oxobutanoate: step 1/2. In terms of biological role, catalyzes the reversible reaction in which hydroxymethyl group from 5,10-methylenetetrahydrofolate is transferred onto alpha-ketoisovalerate to form ketopantoate. The sequence is that of 3-methyl-2-oxobutanoate hydroxymethyltransferase from Paracoccus denitrificans (strain Pd 1222).